The sequence spans 348 residues: L-threonine 3-dehydrogenase (348 aa).

Cys38 contributes to the Zn(2+) binding site. Catalysis depends on charge relay system residues Thr40 and His43. Zn(2+) is bound by residues His63, Glu64, Cys93, Cys96, Cys99, and Cys107. Residues Ile175, Asp195, Arg200, 263-265 (LGI), and 287-288 (IY) each bind NAD(+).

The protein belongs to the zinc-containing alcohol dehydrogenase family. In terms of assembly, homotetramer. Requires Zn(2+) as cofactor.

The protein localises to the cytoplasm. The catalysed reaction is L-threonine + NAD(+) = (2S)-2-amino-3-oxobutanoate + NADH + H(+). It functions in the pathway amino-acid degradation; L-threonine degradation via oxydo-reductase pathway; glycine from L-threonine: step 1/2. Catalyzes the NAD(+)-dependent oxidation of L-threonine to 2-amino-3-ketobutyrate. The protein is L-threonine 3-dehydrogenase of Deinococcus radiodurans (strain ATCC 13939 / DSM 20539 / JCM 16871 / CCUG 27074 / LMG 4051 / NBRC 15346 / NCIMB 9279 / VKM B-1422 / R1).